A 310-amino-acid polypeptide reads, in one-letter code: uncharacterized protein (310 aa).

Residue His239 is part of the active site.

The protein belongs to the IUNH family.

The protein resides in the cytoplasm. The protein localises to the nucleus. This is an uncharacterized protein from Schizosaccharomyces pombe (strain 972 / ATCC 24843) (Fission yeast).